The sequence spans 233 residues: tRNA (guanine-N(1)-)-methyltransferase (233 aa).

S-adenosyl-L-methionine is bound by residues Gly-113 and Ile-133–Leu-138.

It belongs to the RNA methyltransferase TrmD family. In terms of assembly, homodimer.

The protein resides in the cytoplasm. It carries out the reaction guanosine(37) in tRNA + S-adenosyl-L-methionine = N(1)-methylguanosine(37) in tRNA + S-adenosyl-L-homocysteine + H(+). Specifically methylates guanosine-37 in various tRNAs. The polypeptide is tRNA (guanine-N(1)-)-methyltransferase (Ruminiclostridium cellulolyticum (strain ATCC 35319 / DSM 5812 / JCM 6584 / H10) (Clostridium cellulolyticum)).